Reading from the N-terminus, the 355-residue chain is Fructose-1,6-bisphosphatase class 1 (355 aa).

Glu90, Asp109, Leu111, and Asp112 together coordinate Mg(2+). Substrate is bound by residues 112–115 (DGSS), Asn204, and 256–258 (YLY). Glu276 is a binding site for Mg(2+).

The protein belongs to the FBPase class 1 family. Homotetramer. Mg(2+) serves as cofactor.

The protein resides in the cytoplasm. The enzyme catalyses beta-D-fructose 1,6-bisphosphate + H2O = beta-D-fructose 6-phosphate + phosphate. Its pathway is carbohydrate biosynthesis; gluconeogenesis. The sequence is that of Fructose-1,6-bisphosphatase class 1 from Acidiphilium cryptum (strain JF-5).